A 110-amino-acid polypeptide reads, in one-letter code: Neural hemoglobin (110 aa).

Residues 2–110 form the Globin domain; that stretch reads VNWAAVVDDF…HAIDDILSHL (109 aa). His-70 contacts heme.

Belongs to the globin family. As to quaternary structure, homotetramer. Self-associates in the deoxy state. Seems to dissociate upon oxygenation.

Acts as an oxygen store capable of sustaining neuronal activity in an anoxic environment for 5 to 30 minutes. This chain is Neural hemoglobin, found in Cerebratulus lacteus (Milky ribbon worm).